The sequence spans 426 residues: Serine hydroxymethyltransferase 1 (426 aa).

(6S)-5,6,7,8-tetrahydrofolate-binding positions include leucine 121 and 125–127 (GHL). Lysine 230 carries the post-translational modification N6-(pyridoxal phosphate)lysine. 355 to 357 (SPF) contributes to the (6S)-5,6,7,8-tetrahydrofolate binding site.

This sequence belongs to the SHMT family. Homodimer. It depends on pyridoxal 5'-phosphate as a cofactor.

The protein localises to the cytoplasm. It carries out the reaction (6R)-5,10-methylene-5,6,7,8-tetrahydrofolate + glycine + H2O = (6S)-5,6,7,8-tetrahydrofolate + L-serine. The protein operates within one-carbon metabolism; tetrahydrofolate interconversion. Its pathway is amino-acid biosynthesis; glycine biosynthesis; glycine from L-serine: step 1/1. In terms of biological role, catalyzes the reversible interconversion of serine and glycine with tetrahydrofolate (THF) serving as the one-carbon carrier. This reaction serves as the major source of one-carbon groups required for the biosynthesis of purines, thymidylate, methionine, and other important biomolecules. Also exhibits THF-independent aldolase activity toward beta-hydroxyamino acids, producing glycine and aldehydes, via a retro-aldol mechanism. The sequence is that of Serine hydroxymethyltransferase 1 from Hahella chejuensis (strain KCTC 2396).